We begin with the raw amino-acid sequence, 409 residues long: Growth-regulating factor 8 (409 aa).

Composition is skewed to gly residues over residues 1 to 10 (MLSSCGGHGH) and 27 to 36 (QQGGGGGGGQ). The disordered stretch occupies residues 1 to 81 (MLSSCGGHGH…GGGGQMLSFS (81 aa)). Over residues 56–68 (SSSSFLGSTSSSC) the composition is skewed to low complexity. Residues 107 to 142 (PFTPTQWMELEHQALIYKHIAANVSVPSSLLLPIRR) form the QLQ domain. The WRC domain occupies 158–202 (DVEPRRCRRTDGKKWRCSRDAVGDQKYCERHINRGRHRSRKHVEG). 2 consecutive short sequence motifs (bipartite nuclear localization signal) follow at residues 163-173 (RCRRTDGKKWR) and 191-198 (RGRHRSRK). Positions 221-242 (SSRGHTVARQKQVKGSAATVSD) are disordered.

The protein belongs to the GRF family.

Its subcellular location is the nucleus. Functionally, transcription activator that plays a regulatory role in gibberellin-induced stem elongation. In Oryza sativa subsp. japonica (Rice), this protein is Growth-regulating factor 8 (GRF8).